Reading from the N-terminus, the 200-residue chain is Phospholipase A2 inhibitor CNF (200 aa).

A signal peptide spans 1-19 (MKYLHTICLLFIFVARGNS). 8 cysteine pairs are disulfide-bonded: C22–C46, C25–C32, C39–C67, C73–C94, C95–C100, C118–C143, C136–C165, and C169–C191. N-linked (GlcNAc...) asparagine; partial glycosylation occurs at N176.

In terms of assembly, occurs as a mixture of oligomers. Tetrameric arrangement appears to be the predominant quaternary structure. Interacts with phospholipase A2 crotoxin basic subunit CBd; the interaction leads to dissociation of the CA-CB heterodimer and to inhibition of PLA2 activity of the CB subunit. In terms of processing, the carbohydrate moiety increases the inhibition capacity of CNF, but is not essential for activity and for oligomerization. Expressed by the liver.

The protein localises to the secreted. Functionally, inhibits the PLA2 activity of crotoxin (CTX) by replacing the acid subunit (CA) in the CTX complex. Displays a pro-inflammatory action through activation of important main signaling pathways for human leukocytes, in vitro. Abolishes both the muscle-paralyzing and muscle-damaging activities of CTX in mice phrenic nerve-diaphragm muscle preparations. The polypeptide is Phospholipase A2 inhibitor CNF (Crotalus durissus terrificus (South American rattlesnake)).